The sequence spans 595 residues: Tumor necrosis factor receptor superfamily member 8 (595 aa).

The first 18 residues, 1–18 (MRVLLAALGLLFLGALRA), serve as a signal peptide directing secretion. Over 19–385 (FPQDRPFEDT…STGKPVLDAG (367 aa)) the chain is Extracellular. TNFR-Cys repeat units follow at residues 28–66 (TCHGNPSHYYDKAVRRCCYRCPMGLFPTQQCPQRPTDCR), 68–106 (QCEPDYYLDEADRCTACVTCSRDDLVEKTPCAWNSSRVC), and 107–150 (ECRP…TVCE). 8 disulfide bridges follow: C29-C44, C45-C58, C48-C65, C69-C81, C84-C98, C87-C106, C108-C122, and C131-C149. An N-linked (GlcNAc...) asparagine glycan is attached at N32. N101 is a glycosylation site (N-linked (GlcNAc...) asparagine). Residues 167-238 (KEPSSGTIPQ…PTQPCPEGSG (72 aa)) form a disordered region. Residues 179-194 (PTPVSPATSSASTMPV) show a composition bias toward low complexity. 3 TNFR-Cys repeats span residues 205–241 (ASKLTRAPDSPSSVGRPSSDPGLSPTQPCPEGSGDCR), 243–281 (QCEPDYYLDEAGRCTACVSCSRDDLVEKTPCAWNSSRTC), and 282–325 (ECRP…TTFE). Disulfide bonds link C233-C240, C244-C256, C259-C273, C262-C281, C283-C297, and C289-C300. Residue N276 is glycosylated (N-linked (GlcNAc...) asparagine). The tract at residues 323 to 355 (TFEAPPLGTQPDCNPTPENGEAPASTSPTQSLL) is disordered. The N-linked (GlcNAc...) asparagine glycan is linked to N336. Positions 346-355 (ASTSPTQSLL) are enriched in polar residues. Residues 386–406 (PVLFWVILVLVVVVGSSAFLL) form a helical membrane-spanning segment. At 407–595 (CHRRACRKRI…DPLPTAASGK (189 aa)) the chain is on the cytoplasmic side. A phosphoserine mark is found at S438 and S452. Disordered regions lie at residues 438–457 (SRPRRSSTQLRSGASVTEPV), 485–509 (LQDASPAGGPSSPRDLPEPRVSTEH), and 536–595 (EGRG…ASGK). Over residues 443 to 452 (SSTQLRSGAS) the composition is skewed to polar residues. The segment covering 499 to 509 (DLPEPRVSTEH) has biased composition (basic and acidic residues).

The protein belongs to the TNFR8 family. As to quaternary structure, interacts with TRAF1, TRAF2, TRAF3 and TRAF5. In terms of processing, phosphorylated on serine and tyrosine residues. Isoform 2 is constitutively phosphorylated. In terms of tissue distribution, detected in alveolar macrophages (at protein level).

The protein localises to the cell membrane. Its subcellular location is the cytoplasm. In terms of biological role, receptor for TNFSF8/CD30L. May play a role in the regulation of cellular growth and transformation of activated lymphoblasts. Regulates gene expression through activation of NF-kappa-B. This Homo sapiens (Human) protein is Tumor necrosis factor receptor superfamily member 8.